The primary structure comprises 527 residues: MDTAVNESLSISYNLEQFLIVLSVSLSIATLSKTVPILRKIPYTLLLVIVGMALAFVDVKLINLSPELIMEIFLPPLLFEAAWNLQWRNLKENWFPITLFATLGVVICVVGIAFPLSYWGGMELAIAFLAAAALSATDPVSVIALFKELGASKKLNTLMEGESLFNDGVAVVVFLILVGIPLGTSTFDLSVTLARFVTVIGIGVGCGLVIGFSLSLLTQRFDLPFVEQSLTLVSAYGAYILAENLGGSGVIGVVVVGMVLGNYGSRIGMNPRTRLIVSIFWEFVAFFVNSIIFLLIGDQIGLSSLSDHLNLILIAIAAVVVTRLVSVFGLSLISNKVSDQISSTHITLQEQTVLWWGGLRGSVAIAVALSVPQAIAERQAIIDIVFGVVLFTLLVQGLTTQFVLKGLDLIGDQPQRLEYAELVSRQIALRRVLAELEKTDEFPDINPERLRYKQELVQGQLQSVTDKLKLLLQEYPLLQEVANKKFDQTVLDIEAETYADLIRMGRLEENIMPLLVTLEGENVAEPS.

Transmembrane regions (helical) follow at residues 18-38 (FLIVLSVSLSIATLSKTVPIL), 41-61 (IPYTLLLVIVGMALAFVDVKL), 94-114 (WFPITLFATLGVVICVVGIAF), 126-146 (IAFLAAAALSATDPVSVIALF), 169-189 (VAVVVFLILVGIPLGTSTFDL), 196-216 (FVTVIGIGVGCGLVIGFSLSL), 240-260 (ILAENLGGSGVIGVVVVGMVL), 276-296 (IVSIFWEFVAFFVNSIIFLLI), 311-331 (LILIAIAAVVVTRLVSVFGLS), 352-372 (TVLWWGGLRGSVAIAVALSVP), and 380-400 (AIIDIVFGVVLFTLLVQGLTT).

The protein belongs to the monovalent cation:proton antiporter 1 (CPA1) transporter (TC 2.A.36) family.

Its subcellular location is the cell membrane. Its function is as follows. Na(+)/H(+) antiporter that extrudes sodium in exchange for external protons. Might be able to function at relatively high concentrations of Na(+) ions. Also has Li(+)/H(+) antiport activity under K(+)-rich conditions, but it might not have any physiological relevance. The chain is Low-affinity Na(+)/H(+) antiporter NhaS1 (nhaS1) from Synechocystis sp. (strain ATCC 27184 / PCC 6803 / Kazusa).